A 313-amino-acid polypeptide reads, in one-letter code: NAD-capped RNA hydrolase NudC (313 aa).

Arg111 serves as a coordination point for substrate. The 126-residue stretch at 168 to 293 folds into the Nudix hydrolase domain; that stretch reads PRIDPAVICL…DWSSASESKL (126 aa). Residues Ala202, Glu218, and Glu222 each coordinate a divalent metal cation. The Nudix box motif lies at 203–224; the sequence is GFVEAGESFEVCVAREIREEIG. 236–243 is a binding site for substrate; sequence QPWPFPRS. Glu264 is an a divalent metal cation binding site.

The protein belongs to the Nudix hydrolase family. NudC subfamily. In terms of assembly, homodimer. Mg(2+) is required as a cofactor. Requires Mn(2+) as cofactor.

The enzyme catalyses a 5'-end NAD(+)-phospho-ribonucleoside in mRNA + H2O = a 5'-end phospho-adenosine-phospho-ribonucleoside in mRNA + beta-nicotinamide D-ribonucleotide + 2 H(+). The catalysed reaction is NAD(+) + H2O = beta-nicotinamide D-ribonucleotide + AMP + 2 H(+). It carries out the reaction NADH + H2O = reduced beta-nicotinamide D-ribonucleotide + AMP + 2 H(+). Functionally, mRNA decapping enzyme that specifically removes the nicotinamide adenine dinucleotide (NAD) cap from a subset of mRNAs by hydrolyzing the diphosphate linkage to produce nicotinamide mononucleotide (NMN) and 5' monophosphate mRNA. The NAD-cap is present at the 5'-end of some mRNAs and stabilizes RNA against 5'-processing. Has preference for mRNAs with a 5'-end purine. Catalyzes the hydrolysis of a broad range of dinucleotide pyrophosphates. In Mycobacterium bovis (strain ATCC BAA-935 / AF2122/97), this protein is NAD-capped RNA hydrolase NudC.